The primary structure comprises 504 residues: Cobyric acid synthase (504 aa).

Positions 254-442 (AIDVAVIRYP…MHDLFHNDMF (189 aa)) constitute a GATase cobBQ-type domain. C336 (nucleophile) is an active-site residue. The active site involves H434.

This sequence belongs to the CobB/CobQ family. CobQ subfamily.

It functions in the pathway cofactor biosynthesis; adenosylcobalamin biosynthesis. In terms of biological role, catalyzes amidations at positions B, D, E, and G on adenosylcobyrinic A,C-diamide. NH(2) groups are provided by glutamine, and one molecule of ATP is hydrogenolyzed for each amidation. This Anoxybacillus flavithermus (strain DSM 21510 / WK1) protein is Cobyric acid synthase.